The following is a 1293-amino-acid chain: MEIIRGAPALSTFRVQKLMEACVNAALPVRQIYAEYVHLADLSELLETNEREQLEKILTYGPAIEAHTPQGSLLFVTPRPGTISPWSSKATDIAHNCGLGKVKRLERGVAYYVESDTLTVEQQQTLKGLLHDRMVEVVLDDFAKADVLFKRTEPAPFKSVNVLAEGRRALEVANVEMGLALAEDEIDYLVENFVRLNRNPNDIELMMFAQANSEHCRHKIFNADWTIDGEAQPKSLFKMIKNTFETTPDHVLSAYKDNAAVMEGSVAGRFFPDPNGVYSYHTEPMHVLMKVETHNHPTAISPYPGAATGSGGEIRDEGATGRGSKPKAGLTGFSVSNLKIPGFVQPWEGSYGKPDRIVSALDIMTEGPLGGAAFNNEFGRPALLGYFRTYEQEVSSHNGVEVRGYHKPIMLAGGLGNIREEHVQKGEITVGAKLIVLGGPAMNIGLGGGAASSMASGQSSEDLDFASVQRENPEMERRCQEVIDRCWQLGDKNPIQFIHDVGAGGLSNAFPELVNDGGRGGIFNLRNVPSDEPGMSPLEIWCNESQERYVLSVAAEDLPLFTAICERERAPFAVVGEATQEQHLTLADSHFDNNPIDLPLEVLLGKAPKMSRNVVSAKAVSPALEQSNIDVKEAVKRILSLPTVADKTFLITIGDRTVTGLVNRDQMVGPWQVPVADCAVTAASFDTYAGEAMSMGERTPLALLDFGASARMAVAESIMNIAGADIGSFKRIKLSANWMSAAGHPGEDAGLYEAVKAVGEELCPELSLTIPVGKDSMSMKTAWQQDGANKTVTAPMSLVISAFGVVQDIRNTVTPELRSDKGETSLLLVDLGAGKNRLGGSCLAQVYGELGDIAPDLDDAALLRGFFETMQKLVAKKSVIAYHDRSDGGLFTTLVEMAFAGNTGLSIDLSALQGTDVERLFNEELGGVLQVSRADAELIAAQFAQAGVPCHMIGTLANDQRVTIKDGAREVFSETRVALRTLWSETTYRMQALRDNPACALEEFKLKQDETDLGLTVNLSFDPSEDVAAPYILKGAAPKMAILREQGVNSHVEMAAAFDRAGFESLDVHMSDILSGRISLEEFQGLVACGGFSYGDVLGAGEGWAKSILFNERARDEFSRFFERDSSFALGVCNGCQMLSNLKEIIPGSEHWPRFVRNRSERFEARFSLVEVQQSPSLFFQGMAGSRMPIAVSHGEGHAEFASAQALALAEASGTIALRFVNGNGEIATQYPQNPNGSPNGLTGICTTDGRVTLMMPHPERVFRTVANSWHPDNWGEDSPWMRMFRNARVNLG.

ATP contacts are provided by residues 305 to 316 (GAATGSGGEIRD) and Ala-676. Residues 305–327 (GAATGSGGEIRDEGATGRGSKPK) form a disordered region. Mg(2+) is bound by residues Asp-677, Glu-716, Asn-720, and Asp-884. Ser-886 is a binding site for ATP. The Glutamine amidotransferase type-1 domain maps to 1040-1293 (MAILREQGVN…MFRNARVNLG (254 aa)). The active-site Nucleophile is the Cys-1133. Residues His-1258 and Glu-1260 contribute to the active site.

The protein in the N-terminal section; belongs to the FGAMS family. As to quaternary structure, monomer.

It is found in the cytoplasm. It carries out the reaction N(2)-formyl-N(1)-(5-phospho-beta-D-ribosyl)glycinamide + L-glutamine + ATP + H2O = 2-formamido-N(1)-(5-O-phospho-beta-D-ribosyl)acetamidine + L-glutamate + ADP + phosphate + H(+). It functions in the pathway purine metabolism; IMP biosynthesis via de novo pathway; 5-amino-1-(5-phospho-D-ribosyl)imidazole from N(2)-formyl-N(1)-(5-phospho-D-ribosyl)glycinamide: step 1/2. Phosphoribosylformylglycinamidine synthase involved in the purines biosynthetic pathway. Catalyzes the ATP-dependent conversion of formylglycinamide ribonucleotide (FGAR) and glutamine to yield formylglycinamidine ribonucleotide (FGAM) and glutamate. The chain is Phosphoribosylformylglycinamidine synthase from Shewanella sp. (strain MR-4).